The chain runs to 108 residues: Nucleoid-associated protein PLES_37951 (108 aa).

2 disordered regions span residues 1-25 and 87-108; these read MMKG…KMQE and NQEK…KMPF. A compositionally biased stretch (polar residues) spans 87–98; sequence NQEKMSGFTSGM.

It belongs to the YbaB/EbfC family. In terms of assembly, homodimer.

The protein resides in the cytoplasm. The protein localises to the nucleoid. Functionally, binds to DNA and alters its conformation. May be involved in regulation of gene expression, nucleoid organization and DNA protection. The sequence is that of Nucleoid-associated protein PLES_37951 from Pseudomonas aeruginosa (strain LESB58).